The chain runs to 613 residues: Cleavage and polyadenylation specificity factor subunit 3-II (613 aa).

Positions 67–72 (HFHMDH) match the HXHXDH motif motif.

Belongs to the metallo-beta-lactamase superfamily. RNA-metabolizing metallo-beta-lactamase-like family. INTS11 subfamily. Component of the CPSF complex, at least composed of CPSF160, CPSF100, CPSF73-I, CPSF73-II, CPSF30, FY and FIPS5. Interacts with CPSF30, CPSF100, CPSF160 and FY. As to expression, highly expressed in senescence leaves, petals, stamens, pollen and late stages of siliques with seeds. Also detected in roots, stems, leaves and seedlings.

Its subcellular location is the nucleus. Component of the cleavage and polyadenylation specificity factor (CPSF) complex that play a key role in pre-mRNA 3'-end formation, recognizing the AAUAAA signal sequence and interacting with poly(A) polymerase and other factors to bring about cleavage and poly(A) addition. May function as mRNA 3'-end-processing endonuclease and also be involved in the histone 3'-end pre-mRNA processing. The sequence is that of Cleavage and polyadenylation specificity factor subunit 3-II (CPSF73-II) from Arabidopsis thaliana (Mouse-ear cress).